Reading from the N-terminus, the 311-residue chain is MEQFDQLVLNSISAKALKSYLTTKIAEAIDELAAKKNSPKKKAQTKKPENRIPLDLINKNFVSKFGLKGYKDGVLNSLICSLVENNYFENGKLKRGKHDELVLLDIEKEILARIDENSSLNIDVLDVKVLANRLRTNADRFEFKGHTYYLEQNKTEDIINQLIKNSAISMDMKNTIKDTFYMISDELLDVFKNRLFKCPQVKDNIISRARLYEYFIKATKPDDSKIYVILKDDNIAKILNIETIVIDHFIYTKHSLLVSSISNQIDKYSKKFNDQFYSSISEYIKDNEKINLSKVIEYLTISTVKIENTVE.

Belongs to the chordopoxvirinae I1 family.

It localises to the virion. In terms of biological role, late DNA-binding protein which binds to the hairpin form of the viral telomeric sequence. Required for the production of mature virions (MV). The sequence is that of Telomere-binding protein I1 homolog from Fowlpox virus (strain NVSL) (FPV).